The sequence spans 895 residues: Cellulose 1,4-beta-cellobiosidase (895 aa).

Positions 1 to 27 are cleaved as a signal peptide; it reads MNFRRMLCAAIVLTIVLSIMLPSTVFA. Positions 40 to 199 constitute a CBM-cenC domain; sequence NDLLYERTFD…YLDDVSLYDP (160 aa). Residues 199-240 are linker; sequence PRFVKPVEYVLPQPDVRVNQVGYLPFAKKYATVVSSSTSPLK. Residues 241-815 form a catalytic region; that stretch reads WQLLNSANQV…WVTAYLDEID (575 aa). Catalysis depends on Asp386, which acts as the Nucleophile. Active-site residues include His737, Asp786, and Glu795. The Dockerin domain maps to 828–894; the sequence is PEVIYGDCNG…ILKEIDVLPH (67 aa).

This sequence belongs to the glycosyl hydrolase 9 (cellulase E) family.

It localises to the secreted. It carries out the reaction Hydrolysis of (1-&gt;4)-beta-D-glucosidic linkages in cellulose and cellotetraose, releasing cellobiose from the non-reducing ends of the chains.. Its activity is regulated as follows. Inhibited by cellobiose. This Acetivibrio thermocellus (Hungateiclostridium thermocellum) protein is Cellulose 1,4-beta-cellobiosidase (celK).